Reading from the N-terminus, the 778-residue chain is Protein SPT2 homolog (778 aa).

Disordered regions lie at residues 1–21 (MDFHSVLKMAAAKPGSDGIAK), 50–625 (KKDE…AKPK), and 639–685 (VPKS…DDDD). The interval 1 to 665 (MDFHSVLKMA…PGHRPAMRPP (665 aa)) is important for interaction with DNA. Positions 44–83 (VQAFLRKKDEESRRKETVEKRKKEDLLAKRKELKHDRKAR) form a coiled coil. Over residues 50–78 (KKDEESRRKETVEKRKKEDLLAKRKELKH) the composition is skewed to basic and acidic residues. Positions 114–135 (EEDQNDNMAAEGEEYMTEEELY) are enriched in acidic residues. The span at 153–167 (QKVPKPAPGKKPPTP) shows a compositional bias: pro residues. Residues 190-227 (RPVKKEERLRTAEELKELEFLERKAQKADRKDPKRNEQ) are compositionally biased toward basic and acidic residues. The stretch at 193–221 (KKEERLRTAEELKELEFLERKAQKADRKD) forms a coiled coil. Polar residues predominate over residues 242–269 (LKGTHSGNSKSSSTEQNGTIRKSSSDTG). The segment covering 270–286 (SRTEKSGSVFHTKESKK) has biased composition (basic and acidic residues). A compositionally biased stretch (low complexity) spans 312–335 (SSQPSAASNSAFGRPSGSARPSGS). 2 stretches are compositionally biased toward gly residues: residues 336–357 (SGPGRPLGGSGSSSGKSTGGSA) and 365–384 (GGSGSGSGKPMGGSGSGKPI). Low complexity predominate over residues 385-394 (GGLHSSHGSG). Over residues 395-417 (KPTGGTGSGSGKPTGASGSGSGK) the composition is skewed to gly residues. 2 stretches are compositionally biased toward low complexity: residues 418–493 (PTGS…SGSA) and 506–559 (GSGS…PSSS). A compositionally biased stretch (polar residues) spans 588–604 (VRPNSTSVPGSARSSLG). A compositionally biased stretch (pro residues) spans 662–671 (MRPPGPPLPP). Residues 666–778 (GPPLPPITSS…QLKAAKKMSR (113 aa)) are important for interaction with histones. Positions 735 to 778 (REQQKEEARSLRLGIQEDLEELQREEEELKRKAKQLKAAKKMSR) form a coiled coil.

The protein belongs to the SPT2 family. Interacts with histones. Interacts with a heterotetrameric complex formed by histone H3 and H4, especially when the histone tetramer is not bound to DNA.

The protein localises to the nucleus. Its subcellular location is the nucleolus. Functionally, histone chaperone that stabilizes pre-existing histone tetramers and regulates replication-independent histone exchange on chromatin. Required for normal chromatin refolding in the coding region of transcribed genes, and for the suppression of spurious transcription. Binds DNA and histones and promotes nucleosome assembly (in vitro). Facilitates formation of tetrameric histone complexes containing histone H3 and H4. Modulates RNA polymerase 1-mediated transcription. Binds DNA, with a preference for branched DNA species, such as Y-form DNA and Holliday junction DNA. The polypeptide is Protein SPT2 homolog (spty2d1) (Xenopus tropicalis (Western clawed frog)).